The sequence spans 142 residues: Large ribosomal subunit protein uL11 (142 aa).

The protein belongs to the universal ribosomal protein uL11 family. Part of the ribosomal stalk of the 50S ribosomal subunit. Interacts with L10 and the large rRNA to form the base of the stalk. L10 forms an elongated spine to which L12 dimers bind in a sequential fashion forming a multimeric L10(L12)X complex. Post-translationally, one or more lysine residues are methylated.

Forms part of the ribosomal stalk which helps the ribosome interact with GTP-bound translation factors. This is Large ribosomal subunit protein uL11 from Bartonella bacilliformis (strain ATCC 35685 / KC583 / Herrer 020/F12,63).